Here is a 275-residue protein sequence, read N- to C-terminus: Large ribosomal subunit protein uL2 (275 aa).

A disordered region spans residues 224-275; that stretch reads AMNPVDHPHGGGEAKAGQGNPHPVTPWGVPTKGYKTRKNKRTQQFIVRDRRG.

The protein belongs to the universal ribosomal protein uL2 family. As to quaternary structure, part of the 50S ribosomal subunit. Forms a bridge to the 30S subunit in the 70S ribosome.

One of the primary rRNA binding proteins. Required for association of the 30S and 50S subunits to form the 70S ribosome, for tRNA binding and peptide bond formation. It has been suggested to have peptidyltransferase activity; this is somewhat controversial. Makes several contacts with the 16S rRNA in the 70S ribosome. This is Large ribosomal subunit protein uL2 from Xanthomonas axonopodis pv. citri (strain 306).